The primary structure comprises 179 residues: Large ribosomal subunit protein uL5 (179 aa).

The protein belongs to the universal ribosomal protein uL5 family. In terms of assembly, part of the 50S ribosomal subunit; part of the 5S rRNA/L5/L18/L25 subcomplex. Contacts the 5S rRNA and the P site tRNA. Forms a bridge to the 30S subunit in the 70S ribosome.

Its function is as follows. This is one of the proteins that bind and probably mediate the attachment of the 5S RNA into the large ribosomal subunit, where it forms part of the central protuberance. In the 70S ribosome it contacts protein S13 of the 30S subunit (bridge B1b), connecting the 2 subunits; this bridge is implicated in subunit movement. Contacts the P site tRNA; the 5S rRNA and some of its associated proteins might help stabilize positioning of ribosome-bound tRNAs. The polypeptide is Large ribosomal subunit protein uL5 (Solidesulfovibrio magneticus (strain ATCC 700980 / DSM 13731 / RS-1) (Desulfovibrio magneticus)).